The chain runs to 372 residues: Aminodeoxyfutalosine synthase (372 aa).

In terms of domain architecture, Radical SAM core spans 53-292 (HKTYFVHSIR…VARLYLDNFP (240 aa)). [4Fe-4S] cluster is bound by residues cysteine 69, cysteine 73, and cysteine 76.

The protein belongs to the radical SAM superfamily. MqnE family. [4Fe-4S] cluster serves as cofactor.

It catalyses the reaction 3-[(1-carboxyvinyl)-oxy]benzoate + S-adenosyl-L-methionine + H2O = 6-amino-6-deoxyfutalosine + hydrogencarbonate + L-methionine + H(+). It functions in the pathway quinol/quinone metabolism; menaquinone biosynthesis. Functionally, radical SAM enzyme that catalyzes the addition of the adenosyl radical to the double bond of 3-[(1-carboxyvinyl)oxy]benzoate, leading to aminodeoxyfutalosine (AFL), a key intermediate in the formation of menaquinone (MK, vitamin K2) from chorismate. The protein is Aminodeoxyfutalosine synthase of Thermus thermophilus (strain ATCC 27634 / DSM 579 / HB8).